The primary structure comprises 185 residues: Inner membrane-spanning protein YciB (185 aa).

The next 5 helical transmembrane spans lie at 27-47, 53-73, 76-96, 118-138, and 149-169; these read IVLV…YGIV, IMAS…EIRY, WKVT…QFQF, TLNL…IYIS, and FKSF…GVYI.

The protein belongs to the YciB family.

It is found in the cell inner membrane. In terms of biological role, plays a role in cell envelope biogenesis, maintenance of cell envelope integrity and membrane homeostasis. The chain is Inner membrane-spanning protein YciB from Haemophilus influenzae (strain 86-028NP).